A 674-amino-acid polypeptide reads, in one-letter code: ATP-dependent DNA helicase Hel308 (674 aa).

ATP contacts are provided by residues Gln27 and 44–51; that span reads VPTAAGKT. Positions 31–197 constitute a Helicase ATP-binding domain; the sequence is IEQFRKGKNI…WLNASLIKSS (167 aa). A DEAH box motif is present at residues 142–145; the sequence is DEIH. The 188-residue stretch at 224-411 folds into the Helicase C-terminal domain; the sequence is DINLLVKETV…PEKVRFNTLA (188 aa).

This sequence belongs to the helicase family. Hel308 subfamily. In terms of assembly, monomer.

It carries out the reaction Couples ATP hydrolysis with the unwinding of duplex DNA by translocating in the 3'-5' direction.. The catalysed reaction is ATP + H2O = ADP + phosphate + H(+). In terms of biological role, DNA-dependent ATPase and 3'-5' DNA helicase that may be involved in repair of stalled replication forks. This is ATP-dependent DNA helicase Hel308 from Thermoplasma volcanium (strain ATCC 51530 / DSM 4299 / JCM 9571 / NBRC 15438 / GSS1).